A 93-amino-acid chain; its full sequence is MDGIKYAVFTDKSIRLLGKNQYTSNVESGSTRTEIKHWVELFFGVKVIAMNSHRLPGKGRRMGPTMGHTMHYRRMIITLQPGYSIPPLRKKRT.

This sequence belongs to the universal ribosomal protein uL23 family. As to quaternary structure, part of the 50S ribosomal subunit.

The protein localises to the plastid. Its subcellular location is the chloroplast. Its function is as follows. Binds to 23S rRNA. The polypeptide is Large ribosomal subunit protein uL23c (rpl23) (Fragaria ananassa (Strawberry)).